Reading from the N-terminus, the 906-residue chain is Protein transport protein SEC24-2 (906 aa).

Residues Cys222, Cys225, Cys244, and Cys247 each contribute to the Zn(2+) site. Residues 222–247 form a zinc finger-like region; sequence CRRCRSYMNPFVTFIEQGRRWRCNFC.

Belongs to the SEC23/SEC24 family. SEC24 subfamily. The COPII coat is composed of at least 5 proteins: the SEC23/24 complex, the SEC13/31 complex, and the protein SAR1. Golgi apparatus membrane; Peripheral membrane protein; Cytoplasmic side.

Its subcellular location is the cytoplasm. It is found in the cytoplasmic vesicle. The protein resides in the COPII-coated vesicle membrane. It localises to the endoplasmic reticulum membrane. The protein localises to the golgi apparatus membrane. Functionally, component of the coat protein complex II (COPII) which promotes the formation of transport vesicles from the endoplasmic reticulum (ER). The coat has two main functions, the physical deformation of the endoplasmic reticulum membrane into vesicles and the selection of cargo molecules. This is Protein transport protein SEC24-2 (SEC242) from Candida glabrata (strain ATCC 2001 / BCRC 20586 / JCM 3761 / NBRC 0622 / NRRL Y-65 / CBS 138) (Yeast).